A 928-amino-acid chain; its full sequence is Diacylglycerol kinase zeta (928 aa).

Residues 1 to 14 (MEPRDGSPEARSSD) are compositionally biased toward basic and acidic residues. Disordered stretches follow at residues 1–46 (MEPR…RRFP) and 59–82 (KSGLQHLAPPPPTPGAPCSESERQ). The segment covering 15–24 (SESASASSSG) has biased composition (low complexity). A compositionally biased stretch (basic and acidic residues) spans 25-37 (SERDAGPEPDKAP). 2 Phorbol-ester/DAG-type zinc fingers span residues 98–152 (HIWF…NFRC) and 172–230 (HHWV…EEPC). The tract at residues 251 to 280 (PQNTLKASKKKKRASFKRKSSKKGPEEGRW) is disordered. Residues 257–272 (ASKKKKRASFKRKSSK) are compositionally biased toward basic residues. The tract at residues 259-273 (KKKKRASFKRKSSKK) is MARCKS homology. The mediates interaction with RASGRP1 stretch occupies residues 278-416 (GRWRPFIIRP…HVEEGNVVQL (139 aa)). Positions 291-425 (PLMKPLLVFV…LDRWDLHAEP (135 aa)) constitute a DAGKc domain. A Nuclear export signal motif is present at residues 361–369 (LSTLDQLRL). Ser705 carries the post-translational modification Phosphoserine. The interval 759–788 (ARPDLPTPTSPLPTSPCSPTPRSLQGDAAP) is disordered. A compositionally biased stretch (pro residues) spans 763–777 (LPTPTSPLPTSPCSP). At Ser781 the chain carries Phosphoserine. ANK repeat units follow at residues 822 to 852 (QSRTLLHHAVSTGSKDVVRYLLDHAPPEILD) and 857 to 886 (NGETCLHQAAALGQRTICHYIVEAGASLMK). The short motif at 924 to 928 (QETAV) is the PDZ-binding element.

This sequence belongs to the eukaryotic diacylglycerol kinase family. As to quaternary structure, interacts (via PDZ-binding motif) with the PDZ domain of the syntrophin SNTG1 and that of SNX27. Interacts with IRS1 in the absence of insulin; insulin stimulation decreases this interaction. Found in a ternary complex with IRS1 and PIP5K1A in the absence of insulin. Interacts with PIP5K1A. In terms of assembly, forms a signaling complex with RASGRP1 and HRAS. Phosphorylation of the MARCKS homology domain by PKC reduces nuclear accumulation of DGK-zeta. In terms of tissue distribution, highest levels in brain, and substantial levels in skeletal muscle, heart, and pancreas. As to expression, predominantly expressed in muscle.

The protein localises to the nucleus. Its subcellular location is the cytoplasm. It is found in the cytosol. It localises to the cell membrane. The protein resides in the cell projection. The protein localises to the lamellipodium. The catalysed reaction is a 1,2-diacyl-sn-glycerol + ATP = a 1,2-diacyl-sn-glycero-3-phosphate + ADP + H(+). The enzyme catalyses a 1-O-alkyl-sn-glycerol + ATP = a 1-O-alkyl-sn-glycero-3-phosphate + ADP + H(+). It catalyses the reaction 1-O-alkyl-2-acyl-sn-glycerol + ATP = 1-O-alkyl-2-acyl-sn-glycero-3-phosphate + ADP + H(+). It carries out the reaction 1,2-didecanoyl-sn-glycerol + ATP = 1,2-didecanoyl-sn-glycero-3-phosphate + ADP + H(+). The catalysed reaction is 1,2-ditetradecanoyl-sn-glycerol + ATP = 1,2-ditetradecanoyl-sn-glycero-3-phosphate + ADP + H(+). The enzyme catalyses 1-hexadecanoyl-2-(9Z-octadecenoyl)-sn-glycerol + ATP = 1-hexadecanoyl-2-(9Z-octadecenoyl)-sn-glycero-3-phosphate + ADP + H(+). It catalyses the reaction 1-hexadecanoyl-2-(5Z,8Z,11Z,14Z-eicosatetraenoyl)-sn-glycerol + ATP = 1-hexadecanoyl-2-(5Z,8Z,11Z,14Z-eicosatetraenoyl)-sn-glycero-3-phosphate + ADP + H(+). It carries out the reaction 1-octadecanoyl-2-(9Z-octadecenoyl)-sn-glycerol + ATP = 1-octadecanoyl-2-(9Z-octadecenoyl)-sn-glycero-3-phosphate + ADP + H(+). The catalysed reaction is 1-octadecanoyl-2-(5Z,8Z,11Z,14Z-eicosatetraenoyl)-sn-glycerol + ATP = 1-octadecanoyl-2-(5Z,8Z,11Z,14Z-eicosatetraenoyl)-sn-glycero-3-phosphate + ADP + H(+). The enzyme catalyses 1-octadecanoyl-2-(4Z,7Z,10Z,13Z,16Z,19Z-docosahexaenoyl)-sn-glycerol + ATP = 1-octadecanoyl-2-(4Z,7Z,10Z,13Z,16Z,19Z-docosahexaenoyl)-sn-glycero-3-phosphate + ADP + H(+). It catalyses the reaction 1,2-di-(9Z-octadecenoyl)-sn-glycerol + ATP = 1,2-di-(9Z-octadecenoyl)-sn-glycero-3-phosphate + ADP + H(+). It carries out the reaction 1-(9Z-octadecenoyl)-2-hexadecanoyl-sn-glycerol + ATP = 1-(9Z)-octadecenoyl-2-hexadecanoyl-sn-glycero-3-phosphate + ADP + H(+). The catalysed reaction is 1-eicosanoyl-2-(5Z,8Z,11Z,14Z)-eicosatetraenoyl-sn-glycerol + ATP = 1-eicosanoyl-2-(5Z,8Z,11Z,14Z)-eicosatetraenoyl-sn-glycero-3-phosphate + ADP + H(+). The enzyme catalyses 1,2-di-(5Z,8Z,11Z,14Z)-eicosatetraenoyl-sn-glycerol + ATP = 1,2-di-(5Z,8Z,11Z,14Z)-eicosatetraenoyl-sn-glycero-3-phosphate + ADP + H(+). It catalyses the reaction 1-O-hexadecyl-2-acetyl-sn-glycerol + ATP = 1-O-hexadecyl-2-acetyl-sn-glycero-3-phosphate + ADP + H(+). It carries out the reaction 1-O-hexadecyl-2-(5Z,8Z,11Z,14Z-eicosatetraenoyl)-sn-glycerol + ATP = 1-O-hexadecyl-2-(5Z,8Z,11Z,14Z-eicosatetraenoyl)-sn-glycero-3-phosphate + ADP + H(+). The catalysed reaction is 1-O-hexadecyl-2-(9Z-octadecenoyl)-sn-glycerol + ATP = 1-O-hexadecyl-2-(9Z-octadecenoyl)-sn-glycero-3-phosphate + ADP + H(+). The enzyme catalyses 1-O-hexadecyl-sn-glycerol + ATP = 1-O-hexadecyl-sn-glycero-3-phosphate + ADP + H(+). Its pathway is lipid metabolism; glycerolipid metabolism. Its activity is regulated as follows. Activated by 1,2-diacyl-sn-glycero-3-phosphate/phosphatidic acid irrespective of its acyl chain composition. In terms of biological role, diacylglycerol kinase that converts diacylglycerol/DAG into phosphatidic acid/phosphatidate/PA and regulates the respective levels of these two bioactive lipids. Thereby, acts as a central switch between the signaling pathways activated by these second messengers with different cellular targets and opposite effects in numerous biological processes. Also plays an important role in the biosynthesis of complex lipids. Does not exhibit an acyl chain-dependent substrate specificity among diacylglycerol species. Can also phosphorylate 1-alkyl-2-acylglycerol in vitro but less efficiently and with a preference for alkylacylglycerols containing an arachidonoyl group. The biological processes it is involved in include T cell activation since it negatively regulates T-cell receptor signaling which is in part mediated by diacylglycerol. By generating phosphatidic acid, stimulates PIP5KIA activity which regulates actin polymerization. Through the same mechanism could also positively regulate insulin-induced translocation of SLC2A4 to the cell membrane. Functionally, regulates RASGRP1 activity. Its function is as follows. Does not regulate RASGRP1 activity. This chain is Diacylglycerol kinase zeta, found in Homo sapiens (Human).